The following is a 440-amino-acid chain: F-box protein pof12 (440 aa).

The F-box domain maps to 8 to 54 (KNPASIFSHETLLHVLNDLSAHDLAALERVSRSWNSIVRRSSVWHNL).

In terms of assembly, interacts with skp1.

It localises to the nucleus. This Schizosaccharomyces pombe (strain 972 / ATCC 24843) (Fission yeast) protein is F-box protein pof12 (pof12).